The following is a 340-amino-acid chain: TATA-box-binding protein (340 aa).

The disordered stretch occupies residues 1–78 (MNLNSPAVSM…HSLQGSSMQM (78 aa)). Low complexity predominate over residues 57–68 (PQSIQPMQSQQM). Polar residues predominate over residues 69–78 (HSLQGSSMQM). A run of 2 repeats spans residues 168 to 244 (LQNI…ARIV) and 258 to 335 (VQNM…YPIL).

This sequence belongs to the TBP family. In terms of assembly, component of the TFIID basal transcription factor complex, composed of TATA-box-binding protein tbp-1, and a number of TBP-associated factors (TAFs). Binds DNA as monomer.

It is found in the nucleus. Its function is as follows. The TFIID basal transcription factor complex plays a major role in the initiation of RNA polymerase II (Pol II)-dependent transcription. TFIID recognizes and binds promoters via its subunit tbp-1, a TATA-box-binding protein, and promotes assembly of the pre-initiation complex (PIC). The TFIID complex consists of tbp-1 and TBP-associated factors (TAFs). General transcription factor that functions at the core of the TFIID complex. The chain is TATA-box-binding protein (tbp-1) from Caenorhabditis elegans.